The sequence spans 114 residues: Large ribosomal subunit protein uL22 (114 aa).

This sequence belongs to the universal ribosomal protein uL22 family. In terms of assembly, part of the 50S ribosomal subunit.

In terms of biological role, this protein binds specifically to 23S rRNA; its binding is stimulated by other ribosomal proteins, e.g. L4, L17, and L20. It is important during the early stages of 50S assembly. It makes multiple contacts with different domains of the 23S rRNA in the assembled 50S subunit and ribosome. The globular domain of the protein is located near the polypeptide exit tunnel on the outside of the subunit, while an extended beta-hairpin is found that lines the wall of the exit tunnel in the center of the 70S ribosome. In Mycoplasmopsis agalactiae (strain NCTC 10123 / CIP 59.7 / PG2) (Mycoplasma agalactiae), this protein is Large ribosomal subunit protein uL22.